The sequence spans 756 residues: Polyribonucleotide nucleotidyltransferase (756 aa).

Mg(2+) contacts are provided by D532 and D538. The region spanning 598-657 is the KH domain; that stretch reads PRVTAIKVPVDKIGEVIGPKGKMINSITEQTGANISIEDDGTVFVGATDGPSAQAAIDMI. The S1 motif domain maps to 669 to 738; it reads GERFLGTVVK…ARGKISLIPV (70 aa).

It belongs to the polyribonucleotide nucleotidyltransferase family. It depends on Mg(2+) as a cofactor.

The protein resides in the cytoplasm. It carries out the reaction RNA(n+1) + phosphate = RNA(n) + a ribonucleoside 5'-diphosphate. Involved in mRNA degradation. Catalyzes the phosphorolysis of single-stranded polyribonucleotides processively in the 3'- to 5'-direction. The polypeptide is Polyribonucleotide nucleotidyltransferase (Rhodococcus erythropolis (strain PR4 / NBRC 100887)).